The following is a 753-amino-acid chain: MTIHNHTLGFPRVGLRRELKKAQESYWAGKSTREELLAVGRELRARHWEQQKAAGIDLLPVGDFAWYDHVLTTSLLLGNVPARHQNADGTVDIDTLFRIGRGRAPTGEPAAAAEMTKWFNTNYHYMVPEFTKGQQFSLTWTQLLDEVDEALALGHHVKPVLLGPVTYLWLGKVKGEQFDRLSLLNDILPVYQQVIAELAKRGIQWVQIDEPALVLELPQAWLDAFKPAYEALKGQTKLLLTTYFEGVSDNLDTITALPVQGLHVDLVHGHDDVNELHRRLPQEWLLSAGVINGRNVWRADLTEKYAQLKAIAGQRELWVGSSCSLLHSPIDLSVETRLDAEVKSWFAFALQKCEELALLRDALNSGDTTKIEQWSAPIQARKHSARVHNPAVEQRLKAITPQDSQRAHAYPVRAEAQRARFNLPAWPTTTIGSFPQTTEIRGLRLDFKKGNLDAANYRTGIAEHIKQAIAEQERLGLDVLVHGEAERNDMVEYFGEHLDGFVFTQNGWVQSYGSRCVKPPVVIGDISRPAPITVEWAKYAQSLTDKPVKGMLTGPVTILCWSFPREDVSRETIAKQIALALRDEVADLEAAGIGIIQIDEPALREGLPLKRSDWDAYLAWGVEAFRLNAAVAKDDTQIHTHMCYCEFNDIMDSIAALDADVITIETSRSDMELLESFEEFEYPNEIGPGVYDIHSPNVPDVAWIEALLKKAAQRIPQERLWVNPDCGLKTRGWPETRAALANMVKAAQNLRQA.

5-methyltetrahydropteroyltri-L-glutamate-binding positions include 17–20 (RELK) and K117. L-homocysteine contacts are provided by residues 431 to 433 (IGS) and E484. L-methionine is bound by residues 431–433 (IGS) and E484. 5-methyltetrahydropteroyltri-L-glutamate-binding positions include 515 to 516 (RC) and W561. D599 provides a ligand contact to L-homocysteine. D599 contacts L-methionine. Residue E605 participates in 5-methyltetrahydropteroyltri-L-glutamate binding. Zn(2+) is bound by residues H641, C643, and E665. H694 acts as the Proton donor in catalysis. Residue C726 participates in Zn(2+) binding.

The protein belongs to the vitamin-B12 independent methionine synthase family. Requires Zn(2+) as cofactor.

The catalysed reaction is 5-methyltetrahydropteroyltri-L-glutamate + L-homocysteine = tetrahydropteroyltri-L-glutamate + L-methionine. The protein operates within amino-acid biosynthesis; L-methionine biosynthesis via de novo pathway; L-methionine from L-homocysteine (MetE route): step 1/1. Its function is as follows. Catalyzes the transfer of a methyl group from 5-methyltetrahydrofolate to homocysteine resulting in methionine formation. The protein is 5-methyltetrahydropteroyltriglutamate--homocysteine methyltransferase of Cronobacter sakazakii (strain ATCC BAA-894) (Enterobacter sakazakii).